We begin with the raw amino-acid sequence, 305 residues long: Tyrosine recombinase XerC (305 aa).

The region spanning 4-95 (TSIQELIDKW…AVKNFYRFLE (92 aa)) is the Core-binding (CB) domain. In terms of domain architecture, Tyr recombinase spans 116-298 (LLPKALSEDD…SIKHLEAVYT (183 aa)). Catalysis depends on residues arginine 159, lysine 182, histidine 250, arginine 253, and histidine 276. The active-site O-(3'-phospho-DNA)-tyrosine intermediate is tyrosine 285.

Belongs to the 'phage' integrase family. XerC subfamily. In terms of assembly, forms a cyclic heterotetrameric complex composed of two molecules of XerC and two molecules of XerD.

Its subcellular location is the cytoplasm. Its function is as follows. Site-specific tyrosine recombinase, which acts by catalyzing the cutting and rejoining of the recombining DNA molecules. The XerC-XerD complex is essential to convert dimers of the bacterial chromosome into monomers to permit their segregation at cell division. It also contributes to the segregational stability of plasmids. The sequence is that of Tyrosine recombinase XerC from Rickettsia felis (strain ATCC VR-1525 / URRWXCal2) (Rickettsia azadi).